A 154-amino-acid chain; its full sequence is Myoglobin (154 aa).

Residues 2–148 (GLSDQEWQQV…FRNDMASKYK (147 aa)) form the Globin domain. Position 65 (H65) interacts with nitrite. H65 contacts O2. Heme b is bound at residue H94.

Belongs to the globin family. In terms of assembly, monomeric.

It localises to the cytoplasm. It is found in the sarcoplasm. The catalysed reaction is Fe(III)-heme b-[protein] + nitric oxide + H2O = Fe(II)-heme b-[protein] + nitrite + 2 H(+). The enzyme catalyses H2O2 + AH2 = A + 2 H2O. In terms of biological role, monomeric heme protein which primary function is to store oxygen and facilitate its diffusion within muscle tissues. Reversibly binds oxygen through a pentacoordinated heme iron and enables its timely and efficient release as needed during periods of heightened demand. Depending on the oxidative conditions of tissues and cells, and in addition to its ability to bind oxygen, it also has a nitrite reductase activity whereby it regulates the production of bioactive nitric oxide. Under stress conditions, like hypoxia and anoxia, it also protects cells against reactive oxygen species thanks to its pseudoperoxidase activity. The protein is Myoglobin (MB) of Cerorhinca monocerata (Rhinoceros auklet).